Here is a 303-residue protein sequence, read N- to C-terminus: MDEKVELILVPCHSIWKSSSHPSDNSVNLGQLPEYWHLAPFQYEGNDHLAFIKHGLTAIKLLLQRFDTATVIFSGSQTKKEAGAISEAQSYYFLFEKLIRYVMSNDNIDVPNFDNELRLLLKEVKNLLSSQNVNVDELFYGGSITTEEFSLDSFDNLIYSIYRFEEVNKKFPQKITIIGFAFKMPRFISCHAKAIDYPQSNITYIGIDPKPANYNQTQLSKYYDDLVQMEDKNALSLFSSDWYATKDRLLTKKRSRNPFNRTAPYAQNIFCKENGKRIEGIEDDEEYFETKIKCKMPWSSPRQ.

It localises to the cytoplasm. This is an uncharacterized protein from Saccharomyces cerevisiae (strain ATCC 204508 / S288c) (Baker's yeast).